A 71-amino-acid polypeptide reads, in one-letter code: Ceratotoxin-D (71 aa).

Positions 1–23 (MANLKAVFLICILAFIAFHCVVG) are cleaved as a signal peptide. The propeptide occupies 24–35 (APTAEDSIVVKR).

In terms of assembly, homomer of four to six subunits.

The protein localises to the secreted. Functionally, female-specific peptides with potent activity against Gram-positive and Gram-negative bacteria. They have as well hemolytic activity. In Ceratitis capitata (Mediterranean fruit fly), this protein is Ceratotoxin-D (CTXD).